We begin with the raw amino-acid sequence, 643 residues long: Inner kinetochore subunit cnp3 (643 aa).

Disordered stretches follow at residues 55-209 and 224-386; these read SIHL…AFPD and SIKD…QSDS. 2 stretches are compositionally biased toward low complexity: residues 85–97 and 104–125; these read AASDEASHASSSD and DIPSSPLLMNSRALRASRGSSG. Over residues 166-185 the composition is skewed to basic and acidic residues; it reads DFSRIKASPDRKKFEPRRST. 3 stretches are compositionally biased toward polar residues: residues 235-261, 295-304, and 313-322; these read YIQTISKPRRSYVQNNKSEQTIKPSKQ, LNRSLANNSQ, and KPLQESSINS. 2 stretches are compositionally biased toward basic residues: residues 332 to 341 and 360 to 370; these read VKRKRGRPRK and GAKKPAIRNAK. The a.T hook DNA-binding region spans 333 to 345; it reads KRKRGRPRKNKLE.

It belongs to the CENP-C/MIF2 family. Component of the inner kinetochore constitutive centromere-associated network (CCAN) (also known as central kinetochore Sim4 complex in fission yeast), which is composed of at least cnl2, cnp3, cnp20, fta1, fta2, fta3, fta4, fta6, fta7, mal2, mhf1, mhf2, mis6, mis15, mis17, sim4 and wip1.

It is found in the nucleus. It localises to the nucleoplasm. Functionally, component of the kinetochore, a multiprotein complex that assembles on centromeric DNA and attaches chromosomes to spindle microtubules, mediating chromosome segregation and sister chromatid segregation during meiosis and mitosis. Component of the inner kinetochore constitutive centromere-associated network (CCAN), which serves as a structural platform for outer kinetochore assembly. The chain is Inner kinetochore subunit cnp3 (cnp3) from Schizosaccharomyces pombe (strain 972 / ATCC 24843) (Fission yeast).